A 529-amino-acid chain; its full sequence is Cytochrome P450 monooxygenase 136 (529 aa).

The helical transmembrane segment at 9 to 29 (SPLALAVLSIATCQLALVWWY) threads the bilayer. Cysteine 447 provides a ligand contact to heme.

The protein belongs to the cytochrome P450 family. Heme serves as cofactor.

It localises to the membrane. It functions in the pathway secondary metabolite biosynthesis. In terms of biological role, cytochrome P450 monooxygenase that is able to use delta(6)-protoilludene as a substrate to produce delta(6)-protoilludene-5-ol. The polypeptide is Cytochrome P450 monooxygenase 136 (Postia placenta (strain ATCC 44394 / Madison 698-R) (Brown rot fungus)).